Consider the following 216-residue polypeptide: Large ribosomal subunit protein uL1y (216 aa).

This sequence belongs to the universal ribosomal protein uL1 family. Interacts with the GTPase NUG2.

This Arabidopsis thaliana (Mouse-ear cress) protein is Large ribosomal subunit protein uL1y (RPL10AB).